Here is a 577-residue protein sequence, read N- to C-terminus: Arginine--tRNA ligase (577 aa).

Residues 132-142 carry the 'HIGH' region motif; it reads ANPTGPLHVGH.

It belongs to the class-I aminoacyl-tRNA synthetase family. In terms of assembly, monomer.

The protein localises to the cytoplasm. It catalyses the reaction tRNA(Arg) + L-arginine + ATP = L-arginyl-tRNA(Arg) + AMP + diphosphate. The protein is Arginine--tRNA ligase of Pelagibacter ubique (strain HTCC1062).